The primary structure comprises 65 residues: Photosystem II reaction center protein J (65 aa).

A helical transmembrane segment spans residues 35-55; the sequence is LWLVATAGGTAVIFVLGIFFY.

It belongs to the PsbJ family. PSII is composed of 1 copy each of membrane proteins PsbA, PsbB, PsbC, PsbD, PsbE, PsbF, PsbH, PsbI, PsbJ, PsbK, PsbL, PsbM, PsbT, PsbX, PsbY, Psb30/Ycf12, peripheral proteins PsbO, CyanoQ (PsbQ), PsbU, PsbV and a large number of cofactors. It forms dimeric complexes.

Its subcellular location is the cellular thylakoid membrane. In terms of biological role, one of the components of the core complex of photosystem II (PSII). PSII is a light-driven water:plastoquinone oxidoreductase that uses light energy to abstract electrons from H(2)O, generating O(2) and a proton gradient subsequently used for ATP formation. It consists of a core antenna complex that captures photons, and an electron transfer chain that converts photonic excitation into a charge separation. The polypeptide is Photosystem II reaction center protein J (Prochlorococcus marinus (strain NATL2A)).